Here is a 421-residue protein sequence, read N- to C-terminus: Flap endonuclease 1 (421 aa).

Residues 1-109 (MGIKGLAKLL…HELIKRREKR (109 aa)) form an N-domain region. A Mg(2+)-binding site is contributed by aspartate 34. Residues arginine 47 and arginine 75 each coordinate DNA. Residues aspartate 91, glutamate 163, glutamate 165, aspartate 184, and aspartate 186 each coordinate Mg(2+). Residues 127 to 258 (EQDKQSKRLV…KTALKLIREH (132 aa)) are I-domain. A DNA-binding site is contributed by glutamate 163. DNA is bound by residues glycine 236 and aspartate 238. Residue aspartate 238 participates in Mg(2+) binding. Residues 284-307 (KKLDAQSDDDDEEGVESPSKEENN) are disordered. A compositionally biased stretch (acidic residues) spans 289–298 (QSDDDDEEGV). Positions 379-387 (PQTRMDSFF) are interaction with PCNA. The interval 398–421 (SAAKRKADAAKAKAAVSKKKTKKH) is disordered.

The protein belongs to the XPG/RAD2 endonuclease family. FEN1 subfamily. Interacts with PCNA. Three molecules of FEN1 bind to one PCNA trimer with each molecule binding to one PCNA monomer. PCNA stimulates the nuclease activity without altering cleavage specificity. Requires Mg(2+) as cofactor. Phosphorylated. Phosphorylation upon DNA damage induces relocalization to the nuclear plasma.

The protein resides in the nucleus. It is found in the nucleolus. The protein localises to the nucleoplasm. Its subcellular location is the mitochondrion. Structure-specific nuclease with 5'-flap endonuclease and 5'-3' exonuclease activities involved in DNA replication and repair. During DNA replication, cleaves the 5'-overhanging flap structure that is generated by displacement synthesis when DNA polymerase encounters the 5'-end of a downstream Okazaki fragment. It enters the flap from the 5'-end and then tracks to cleave the flap base, leaving a nick for ligation. Also involved in the long patch base excision repair (LP-BER) pathway, by cleaving within the apurinic/apyrimidinic (AP) site-terminated flap. Acts as a genome stabilization factor that prevents flaps from equilibrating into structures that lead to duplications and deletions. Also possesses 5'-3' exonuclease activity on nicked or gapped double-stranded DNA, and exhibits RNase H activity. Also involved in replication and repair of rDNA and in repairing mitochondrial DNA. In Phaeodactylum tricornutum (strain CCAP 1055/1), this protein is Flap endonuclease 1.